A 173-amino-acid chain; its full sequence is NAD(P)H-quinone oxidoreductase subunit J (173 aa).

It belongs to the complex I 30 kDa subunit family. In terms of assembly, NDH-1 can be composed of about 15 different subunits; different subcomplexes with different compositions have been identified which probably have different functions.

It localises to the cellular thylakoid membrane. The catalysed reaction is a plastoquinone + NADH + (n+1) H(+)(in) = a plastoquinol + NAD(+) + n H(+)(out). It carries out the reaction a plastoquinone + NADPH + (n+1) H(+)(in) = a plastoquinol + NADP(+) + n H(+)(out). NDH-1 shuttles electrons from an unknown electron donor, via FMN and iron-sulfur (Fe-S) centers, to quinones in the respiratory and/or the photosynthetic chain. The immediate electron acceptor for the enzyme in this species is believed to be plastoquinone. Couples the redox reaction to proton translocation, and thus conserves the redox energy in a proton gradient. Cyanobacterial NDH-1 also plays a role in inorganic carbon-concentration. This Prochlorococcus marinus (strain NATL1A) protein is NAD(P)H-quinone oxidoreductase subunit J.